Consider the following 95-residue polypeptide: Aspartyl/glutamyl-tRNA(Asn/Gln) amidotransferase subunit C (95 aa).

The protein belongs to the GatC family. Heterotrimer of A, B and C subunits.

It carries out the reaction L-glutamyl-tRNA(Gln) + L-glutamine + ATP + H2O = L-glutaminyl-tRNA(Gln) + L-glutamate + ADP + phosphate + H(+). It catalyses the reaction L-aspartyl-tRNA(Asn) + L-glutamine + ATP + H2O = L-asparaginyl-tRNA(Asn) + L-glutamate + ADP + phosphate + 2 H(+). In terms of biological role, allows the formation of correctly charged Asn-tRNA(Asn) or Gln-tRNA(Gln) through the transamidation of misacylated Asp-tRNA(Asn) or Glu-tRNA(Gln) in organisms which lack either or both of asparaginyl-tRNA or glutaminyl-tRNA synthetases. The reaction takes place in the presence of glutamine and ATP through an activated phospho-Asp-tRNA(Asn) or phospho-Glu-tRNA(Gln). This Phenylobacterium zucineum (strain HLK1) protein is Aspartyl/glutamyl-tRNA(Asn/Gln) amidotransferase subunit C.